A 108-amino-acid chain; its full sequence is UPF0060 membrane protein BH2744 (108 aa).

4 consecutive transmembrane segments (helical) span residues 6-26 (TLFL…WLWL), 31-51 (PVYL…IATF), 60-80 (VYAA…WWID), and 86-106 (TYDW…LWAP).

The protein belongs to the UPF0060 family.

The protein resides in the cell membrane. This Halalkalibacterium halodurans (strain ATCC BAA-125 / DSM 18197 / FERM 7344 / JCM 9153 / C-125) (Bacillus halodurans) protein is UPF0060 membrane protein BH2744.